The sequence spans 710 residues: mRNA export factor crp79 (710 aa).

RRM domains are found at residues 19-102 (IYVG…KLTI) and 222-292 (HFKQ…PTTP). Polar residues predominate over residues 333–348 (QWGSVSTTGVSNQQNH). Residues 333–357 (QWGSVSTTGVSNQQNHPAAWNPDNK) form a disordered region. The RRM 3 domain maps to 401-474 (EDLFSPFGSI…DRIRRLQAFF (74 aa)). The span at 502 to 524 (TIRKPIESSTNKISENPTTLSSK) shows a compositional bias: polar residues. Residues 502 to 544 (TIRKPIESSTNKISENPTTLSSKVENKNEPKTGENKEPSQTNE) are disordered. Basic and acidic residues predominate over residues 525–538 (VENKNEPKTGENKE).

The protein localises to the cytoplasm. It localises to the nucleus. Its function is as follows. Binds the poly(A) tail of mRNA. Involved in the export of mRNA from the nucleus to the cytoplasm. This Schizosaccharomyces pombe (strain 972 / ATCC 24843) (Fission yeast) protein is mRNA export factor crp79 (crp79).